The primary structure comprises 229 residues: Endonuclease NucS (229 aa).

Belongs to the NucS endonuclease family.

It localises to the cytoplasm. Cleaves both 3' and 5' ssDNA extremities of branched DNA structures. The sequence is that of Endonuclease NucS from Corynebacterium diphtheriae (strain ATCC 700971 / NCTC 13129 / Biotype gravis).